Here is a 243-residue protein sequence, read N- to C-terminus: Probable flavin-dependent thymidylate synthase (243 aa).

The ThyX domain occupies 21–239 (FEVDDFEESK…PNTYQDIPDV (219 aa)). FAD-binding positions include S80 and 103-105 (RHR). DUMP-binding positions include 100–103 (ELER), 113–115 (SQR), and R178. Residues 103 to 113 (RHRHLSFSVVS) carry the ThyX motif motif. 194-196 (NHR) contacts FAD. R205 serves as a coordination point for dUMP. The Involved in ionization of N3 of dUMP, leading to its activation role is filled by R205.

The protein belongs to the thymidylate synthase ThyX family. As to quaternary structure, homotetramer. FAD serves as cofactor.

It catalyses the reaction dUMP + (6R)-5,10-methylene-5,6,7,8-tetrahydrofolate + NADPH + H(+) = dTMP + (6S)-5,6,7,8-tetrahydrofolate + NADP(+). It functions in the pathway pyrimidine metabolism; dTTP biosynthesis. Its function is as follows. Catalyzes the reductive methylation of 2'-deoxyuridine-5'-monophosphate (dUMP) to 2'-deoxythymidine-5'-monophosphate (dTMP) while utilizing 5,10-methylenetetrahydrofolate (mTHF) as the methyl donor, and NADPH and FADH(2) as the reductant. In Mycobacterium phage L5 (Mycobacteriophage L5), this protein is Probable flavin-dependent thymidylate synthase (48).